Consider the following 667-residue polypeptide: Probable export ATP-binding/permease protein MacB (667 aa).

The 239-residue stretch at 22 to 260 (LRLAGVSRRF…PVEEVQPAAE (239 aa)) folds into the ABC transporter domain. 58–65 (GASGSGKS) is a binding site for ATP. 4 helical membrane-spanning segments follow: residues 292–312 (LLTM…SAIG), 540–560 (LTLL…IGVM), 601–621 (IGGV…ALFV), and 630–650 (LGSI…FGFV).

It belongs to the ABC transporter superfamily. Macrolide exporter (TC 3.A.1.122) family. In terms of assembly, probably part of a tripartite efflux system, which is composed of an inner membrane transporter, a periplasmic membrane fusion protein, and an outer membrane component.

It localises to the cell inner membrane. Its function is as follows. Probably part of a tripartite efflux system. This is Probable export ATP-binding/permease protein MacB from Pseudomonas entomophila (strain L48).